A 1076-amino-acid chain; its full sequence is Carbamoyl phosphate synthase large chain (1076 aa).

A carboxyphosphate synthetic domain region spans residues methionine 1–glutamate 402. Residues arginine 129, arginine 169, glycine 175, glycine 176, glutamate 208, valine 210, glutamate 215, glycine 241, valine 242, histidine 243, glutamine 285, and glutamate 299 each coordinate ATP. The 196-residue stretch at lysine 133 to valine 328 folds into the ATP-grasp 1 domain. Glutamine 285, glutamate 299, and asparagine 301 together coordinate Mg(2+). 3 residues coordinate Mn(2+): glutamine 285, glutamate 299, and asparagine 301. The interval isoleucine 403–alanine 555 is oligomerization domain. The carbamoyl phosphate synthetic domain stretch occupies residues leucine 556–lysine 939. The 192-residue stretch at alanine 680 to methionine 871 folds into the ATP-grasp 2 domain. Residues arginine 716, lysine 755, leucine 757, glutamate 762, glycine 787, valine 788, histidine 789, serine 790, glutamine 830, and glutamate 842 each coordinate ATP. Glutamine 830, glutamate 842, and asparagine 844 together coordinate Mg(2+). Positions 830, 842, and 844 each coordinate Mn(2+). The 139-residue stretch at methionine 938 to serine 1076 folds into the MGS-like domain. The segment at leucine 940–serine 1076 is allosteric domain.

It belongs to the CarB family. In terms of assembly, composed of two chains; the small (or glutamine) chain promotes the hydrolysis of glutamine to ammonia, which is used by the large (or ammonia) chain to synthesize carbamoyl phosphate. Tetramer of heterodimers (alpha,beta)4. Mg(2+) is required as a cofactor. Requires Mn(2+) as cofactor.

The enzyme catalyses hydrogencarbonate + L-glutamine + 2 ATP + H2O = carbamoyl phosphate + L-glutamate + 2 ADP + phosphate + 2 H(+). It catalyses the reaction hydrogencarbonate + NH4(+) + 2 ATP = carbamoyl phosphate + 2 ADP + phosphate + 2 H(+). It functions in the pathway amino-acid biosynthesis; L-arginine biosynthesis; carbamoyl phosphate from bicarbonate: step 1/1. It participates in pyrimidine metabolism; UMP biosynthesis via de novo pathway; (S)-dihydroorotate from bicarbonate: step 1/3. Large subunit of the glutamine-dependent carbamoyl phosphate synthetase (CPSase). CPSase catalyzes the formation of carbamoyl phosphate from the ammonia moiety of glutamine, carbonate, and phosphate donated by ATP, constituting the first step of 2 biosynthetic pathways, one leading to arginine and/or urea and the other to pyrimidine nucleotides. The large subunit (synthetase) binds the substrates ammonia (free or transferred from glutamine from the small subunit), hydrogencarbonate and ATP and carries out an ATP-coupled ligase reaction, activating hydrogencarbonate by forming carboxy phosphate which reacts with ammonia to form carbamoyl phosphate. The sequence is that of Carbamoyl phosphate synthase large chain from Archaeoglobus fulgidus (strain ATCC 49558 / DSM 4304 / JCM 9628 / NBRC 100126 / VC-16).